The sequence spans 413 residues: D-nopaline dehydrogenase (413 aa).

The protein belongs to the lysopine/nopaline/octopine/opine/vitopine dehydrogenases family. Homotetramer.

It catalyses the reaction D-nopaline + NADP(+) + H2O = L-arginine + 2-oxoglutarate + NADPH + H(+). This is D-nopaline dehydrogenase (nos) from Agrobacterium tumefaciens (strain T37).